Reading from the N-terminus, the 198-residue chain is Na(+)-translocating NADH-quinone reductase subunit E (198 aa).

6 helical membrane passes run 11 to 31 (SIFIENLALSFFLGMCTFLAV), 40 to 60 (GLGIAVVVVQAIAVPANNLVF), 77 to 97 (FLGFITYIGVIAALVQILEMF), 110 to 130 (GIFLPLITVNCAIFGGVSFMV), 140 to 160 (VVYGVGSGISWALAIVLMAAI), and 176 to 196 (LGITFITAGLMALGFMSFSGI).

The protein belongs to the NqrDE/RnfAE family. As to quaternary structure, composed of six subunits; NqrA, NqrB, NqrC, NqrD, NqrE and NqrF.

It is found in the cell inner membrane. It catalyses the reaction a ubiquinone + n Na(+)(in) + NADH + H(+) = a ubiquinol + n Na(+)(out) + NAD(+). NQR complex catalyzes the reduction of ubiquinone-1 to ubiquinol by two successive reactions, coupled with the transport of Na(+) ions from the cytoplasm to the periplasm. NqrA to NqrE are probably involved in the second step, the conversion of ubisemiquinone to ubiquinol. The polypeptide is Na(+)-translocating NADH-quinone reductase subunit E (Tolumonas auensis (strain DSM 9187 / NBRC 110442 / TA 4)).